Reading from the N-terminus, the 125-residue chain is Apolipoprotein C-IV (125 aa).

The N-terminal stretch at Met1 to Cys27 is a signal peptide.

The protein belongs to the apolipoprotein C4 family.

The protein localises to the secreted. In terms of biological role, may participate in lipoprotein metabolism. The chain is Apolipoprotein C-IV (APOC4) from Ateles geoffroyi (Black-handed spider monkey).